Consider the following 291-residue polypeptide: Verruculogen synthase (291 aa).

It belongs to the PhyH family. As to quaternary structure, homodimer. It depends on Fe cation as a cofactor.

The enzyme catalyses fumitremorgin B + 2-oxoglutarate + AH2 + 2 O2 = verruculogen + succinate + A + CO2 + H2O. It functions in the pathway mycotoxin biosynthesis. In terms of biological role, verruculogen synthase; part of the gene cluster that mediates the biosynthesis of fumitremorgins, indole alkaloids that carry not only intriguing chemical structures, but also interesting biological and pharmacological activities. The biosynthesis of fumitremorgin-type alkaloids begins by condensation of the two amino acids L-tryptophan and L-proline to brevianamide F, catalyzed by the non-ribosomal peptide synthetase ftmPS/ftmA. Brevianamide F is then prenylated by the prenyltransferase ftmPT1/ftmB in the presence of dimethylallyl diphosphate, resulting in the formation of tryprostatin B. The three cytochrome P450 monooxygenases, ftmP450-1/ftmC, ftmP450-2/ftmE and ftmP450-3/FtmG, are responsible for the conversion of tryprostatin B to 6-hydroxytryprostatin B, tryprostatin A to fumitremorgin C and fumitremorgin C to 12,13-dihydroxyfumitremorgin C, respectively. The putative methyltransferase ftmMT/ftmD is expected for the conversion of 6-hydroxytryprostatin B to tryprostatin A. FtmPT2/FtmH catalyzes the prenylation of 12,13-dihydroxyfumitre-morgin C in the presence of dimethylallyl diphosphate, resulting in the formation of fumitremorgin B. Fumitremorgin B is further converted to verruculogen by ftmOx1/ftmF via the insertion of an endoperoxide bond between the two prenyl moieties. Finally, verruculogen is further converted to fumitremorgin A by the verruculogen prenyltransferase ftmPT3. The sequence is that of Verruculogen synthase from Neosartorya fischeri (strain ATCC 1020 / DSM 3700 / CBS 544.65 / FGSC A1164 / JCM 1740 / NRRL 181 / WB 181) (Aspergillus fischerianus).